Here is a 692-residue protein sequence, read N- to C-terminus: MARTIPLEKVRNIGIAAHIDAGKTTTTERILFYSGIIHKIGEVHEGTAVTDWMEQERERGITITAAAISTSWKDHQINIIDTPGHVDFTIEVERSMRVLDGVIAVFCSVGGVQPQSETVWRQAERYKVPRIAFINKMDRTGANFYKVHEQIRDRLRANAIAIQLPIGSENDFQGIVDLVRQRAYIYANDQGTDIQETDIPEELQAQVDEFRTKLIEAAAETDDALMAKYFEGEELTEQEIRTALRKGTIAGTIVPVLCGSAFKNKGVQLMLDAVVDYLPAPSEVPPIQGLLPNGDTIERRADDNEPLAALAFKIMADPYGRLTFVRVYSGVLKKGSYVLNASKNKKERISRLVLMKADDRQDVDELRAGDLGAALGLKDTLTGDTLCDDGSPVILESLFIPEPVISVAVEPKTKNDMDKLSKALQSLSEEDPTFRVRVDPETNQTVIAGMGELHLEILVDRMLREFKVEANVGAPQVAYRETIRKAVNKVEGKFIRQSGGKGQYGHVVINLEPGEPGTGFEFVSKIAGGTVPKEYVGPAEQGMKESCESGVLAGYPLIDVKATLIDGSYHDVDSSEMAFKIAGSMAMKEAVLKASPVILEPMMKVEVEVPEDYMGNVIGDLNTRRGQIESQSTEKGLAKVTSKVPLASMFGYATDIRSKTQGRGTFTMEFSHYEEVPRSVAETIIAKSKGNA.

In terms of domain architecture, tr-type G spans 8 to 282 (EKVRNIGIAA…AVVDYLPAPS (275 aa)). GTP is bound by residues 17–24 (AHIDAGKT), 81–85 (DTPGH), and 135–138 (NKMD).

It belongs to the TRAFAC class translation factor GTPase superfamily. Classic translation factor GTPase family. EF-G/EF-2 subfamily.

The protein resides in the cytoplasm. Functionally, catalyzes the GTP-dependent ribosomal translocation step during translation elongation. During this step, the ribosome changes from the pre-translocational (PRE) to the post-translocational (POST) state as the newly formed A-site-bound peptidyl-tRNA and P-site-bound deacylated tRNA move to the P and E sites, respectively. Catalyzes the coordinated movement of the two tRNA molecules, the mRNA and conformational changes in the ribosome. This Nostoc punctiforme (strain ATCC 29133 / PCC 73102) protein is Elongation factor G.